We begin with the raw amino-acid sequence, 178 residues long: Probable DNA-directed RNA polymerase subunit delta (178 aa).

Residues 14 to 81 (LSLIDVAHFI…GNNTWGLRAW (68 aa)) enclose the HTH HARE-type domain. Disordered regions lie at residues 88–122 (DEEVQTQTTPKKKRKSDDDEDEDEEILDDDVDYDD) and 141–178 (LDEDEDDDDHLPDGIEGDLATVEDDYTDGDYTEDPEDK). 3 stretches are compositionally biased toward acidic residues: residues 105–122 (DDEDEDEEILDDDVDYDD), 141–150 (LDEDEDDDDH), and 161–178 (TVEDDYTDGDYTEDPEDK).

Belongs to the RpoE family. RNAP is composed of a core of 2 alpha, a beta and a beta' subunits. The core is associated with a delta subunit and one of several sigma factors.

Participates in both the initiation and recycling phases of transcription. In the presence of the delta subunit, RNAP displays an increased specificity of transcription, a decreased affinity for nucleic acids, and an increased efficiency of RNA synthesis because of enhanced recycling. This chain is Probable DNA-directed RNA polymerase subunit delta, found in Listeria monocytogenes serovar 1/2a (strain ATCC BAA-679 / EGD-e).